Consider the following 429-residue polypeptide: Adenylosuccinate synthetase (429 aa).

GTP is bound by residues 15 to 21 (GDEGKGK) and 43 to 45 (GHV). Asp16 functions as the Proton acceptor in the catalytic mechanism. Asp16 and Gly43 together coordinate Mg(2+). IMP contacts are provided by residues 16–19 (DEGK), 41–44 (NAGH), Thr131, Arg145, Gln225, Thr240, and Arg304. Catalysis depends on His44, which acts as the Proton donor. 300–306 (SNTKRPR) lines the substrate pocket. Residues Arg306, 332–334 (LLD), and 414–416 (SVG) contribute to the GTP site.

It belongs to the adenylosuccinate synthetase family. As to quaternary structure, homodimer. Mg(2+) is required as a cofactor.

It is found in the cytoplasm. It carries out the reaction IMP + L-aspartate + GTP = N(6)-(1,2-dicarboxyethyl)-AMP + GDP + phosphate + 2 H(+). It functions in the pathway purine metabolism; AMP biosynthesis via de novo pathway; AMP from IMP: step 1/2. In terms of biological role, plays an important role in the de novo pathway of purine nucleotide biosynthesis. Catalyzes the first committed step in the biosynthesis of AMP from IMP. In Mesoplasma florum (strain ATCC 33453 / NBRC 100688 / NCTC 11704 / L1) (Acholeplasma florum), this protein is Adenylosuccinate synthetase.